The sequence spans 290 residues: Small ribosomal subunit biogenesis GTPase RsgA (290 aa).

A CP-type G domain is found at 62-219 (RTCLKRPAVA…VADTPGFSRL (158 aa)). GTP contacts are provided by residues 111 to 114 (NKAD) and 161 to 169 (GPSGVGKSS). Zn(2+)-binding residues include Cys243, Cys248, His250, and Cys256.

The protein belongs to the TRAFAC class YlqF/YawG GTPase family. RsgA subfamily. As to quaternary structure, monomer. Associates with 30S ribosomal subunit, binds 16S rRNA. Requires Zn(2+) as cofactor.

The protein localises to the cytoplasm. Its function is as follows. One of several proteins that assist in the late maturation steps of the functional core of the 30S ribosomal subunit. Helps release RbfA from mature subunits. May play a role in the assembly of ribosomal proteins into the subunit. Circularly permuted GTPase that catalyzes slow GTP hydrolysis, GTPase activity is stimulated by the 30S ribosomal subunit. The polypeptide is Small ribosomal subunit biogenesis GTPase RsgA (Moorella thermoacetica (strain ATCC 39073 / JCM 9320)).